The primary structure comprises 351 residues: Protein Wnt-8b (351 aa).

Residues 1-22 (MFLSKPSVYICLFTCVLQLSHS) form the signal peptide. The cysteines at positions 54 and 65 are disulfide-linked. The N-linked (GlcNAc...) asparagine glycan is linked to Asn103. 10 disulfides stabilise this stretch: Cys104–Cys112, Cys114–Cys132, Cys180–Cys194, Cys182–Cys189, Cys256–Cys294, Cys272–Cys287, Cys291–Cys333, Cys309–Cys324, Cys311–Cys321, and Cys316–Cys317. Ser186 carries O-palmitoleoyl serine lipidation. The N-linked (GlcNAc...) asparagine glycan is linked to Asn259.

The protein belongs to the Wnt family. In terms of processing, palmitoleoylation is required for efficient binding to frizzled receptors. Depalmitoleoylation leads to Wnt signaling pathway inhibition. Proteolytic processing by TIKI1 and TIKI2 promotes oxidation and formation of large disulfide-bond oligomers, leading to inactivation of WNT8B. As to expression, expression is restricted to the brain, and more specifically to the forebrain.

It is found in the secreted. Its subcellular location is the extracellular space. The protein resides in the extracellular matrix. Functionally, ligand for members of the frizzled family of seven transmembrane receptors. May play an important role in the development and differentiation of certain forebrain structures, notably the hippocampus. In Homo sapiens (Human), this protein is Protein Wnt-8b (WNT8B).